We begin with the raw amino-acid sequence, 137 residues long: Ribosome-binding factor A (137 aa).

It belongs to the RbfA family. Monomer. Binds 30S ribosomal subunits, but not 50S ribosomal subunits or 70S ribosomes.

Its subcellular location is the cytoplasm. Its function is as follows. One of several proteins that assist in the late maturation steps of the functional core of the 30S ribosomal subunit. Associates with free 30S ribosomal subunits (but not with 30S subunits that are part of 70S ribosomes or polysomes). Required for efficient processing of 16S rRNA. May interact with the 5'-terminal helix region of 16S rRNA. The sequence is that of Ribosome-binding factor A from Trichodesmium erythraeum (strain IMS101).